A 309-amino-acid polypeptide reads, in one-letter code: Homoserine O-succinyltransferase (309 aa).

Cys-142 serves as the catalytic Acyl-thioester intermediate. Positions 163 and 192 each coordinate substrate. His-235 acts as the Proton acceptor in catalysis. Glu-237 is an active-site residue. Arg-249 serves as a coordination point for substrate.

This sequence belongs to the MetA family.

It localises to the cytoplasm. It carries out the reaction L-homoserine + succinyl-CoA = O-succinyl-L-homoserine + CoA. Its pathway is amino-acid biosynthesis; L-methionine biosynthesis via de novo pathway; O-succinyl-L-homoserine from L-homoserine: step 1/1. Its function is as follows. Transfers a succinyl group from succinyl-CoA to L-homoserine, forming succinyl-L-homoserine. The chain is Homoserine O-succinyltransferase from Citrobacter koseri (strain ATCC BAA-895 / CDC 4225-83 / SGSC4696).